We begin with the raw amino-acid sequence, 243 residues long: MAGFMNRMPSFLIEDQLRSGTISVIVGVDEVGYGAIAGPVVAAAVYLPERECDYIKDIKDSKALSSKKREELFCKITAHAKYGVGFARVREIEQHNILVASHISMKRALQNLGVKADLVLVDGSRAPAGLPWAVKTIVKGDSISTSIAAASIIAKVTRDRFMRRLHEQYPEYAWNQNCGYGTKAHMQSLKLYGKTAQHRSTFAPVKQLSSECEGAPPEQLELLSSTGIKTPVDGRGDAVATRD.

The region spanning 23–217 (SVIVGVDEVG…LSSECEGAPP (195 aa)) is the RNase H type-2 domain. A divalent metal cation contacts are provided by aspartate 29, glutamate 30, and aspartate 122. The tract at residues 223-243 (LSSTGIKTPVDGRGDAVATRD) is disordered. A compositionally biased stretch (basic and acidic residues) spans 232–243 (VDGRGDAVATRD).

The protein belongs to the RNase HII family. Requires Mn(2+) as cofactor. Mg(2+) serves as cofactor.

Its subcellular location is the cytoplasm. It catalyses the reaction Endonucleolytic cleavage to 5'-phosphomonoester.. Its function is as follows. Endonuclease that specifically degrades the RNA of RNA-DNA hybrids. This chain is Ribonuclease HII, found in Anaplasma marginale (strain St. Maries).